The primary structure comprises 142 residues: Ornithine decarboxylase antizyme (142 aa).

The span at 1 to 19 (MSSSIVLSNNNSNSNSMSM) shows a compositional bias: low complexity. The segment at 1 to 34 (MSSSIVLSNNNSNSNSMSMIGQSPPCCSDVPNTP) is disordered.

This sequence belongs to the ODC antizyme family. As to quaternary structure, interacts with ODC1 and thereby sterically blocks ODC homodimerization.

Ornithine decarboxylase (ODC) antizyme protein that negatively regulates ODC activity and intracellular polyamine biosynthesis and uptake in response to increased intracellular polyamine levels. Binds to ODC monomers, inhibiting the assembly of the functional ODC homodimer, and targets the monomers for ubiquitin-independent proteolytic destruction by the 26S proteasome. The protein is Ornithine decarboxylase antizyme of Pristionchus pacificus (Parasitic nematode).